A 127-amino-acid polypeptide reads, in one-letter code: MSKSETYRIEVEAVAEYVEAQSNPEDDHYVFAYNITIRNTGTVAARLVSRHWVITDGTGHVQEVHGQGVVGEQPLLAPGESFRYTSGSVLETAVGTMHGSYQMEASDGHRFDAPIPAFMLAMPRVLH.

Positions 3-127 constitute an ApaG domain; it reads KSETYRIEVE…FMLAMPRVLH (125 aa).

The sequence is that of Protein ApaG from Azoarcus sp. (strain BH72).